The sequence spans 597 residues: Hydrogenase-1 large chain (597 aa).

Ni(2+) is bound by residues Cys76, Cys79, Cys576, and Cys579.

This sequence belongs to the [NiFe]/[NiFeSe] hydrogenase large subunit family. As to quaternary structure, heterodimer of a large and a small subunit. Requires Ni(2+) as cofactor.

Its subcellular location is the cell membrane. The enzyme catalyses H2 + A = AH2. The protein is Hydrogenase-1 large chain (hyaB) of Citrobacter freundii.